The following is a 417-amino-acid chain: MLLSVPLLLGLLGLAAAEPAVYFKEQFLDGDGWTSRWIESKHKSDFGKFVLSSGKFYGDEEKDKGLQTSQDARFYALSASFEPFSNKGQTLVVQFTVKHEQNIDCGGGYVKLFPNSLDQTDMHGDSEYNIMFGPDICGPGTKKVHVIFNYKGKNVLINKDIRCKDDEFTHLYTLIVRPDNTYEVKIDNSQVESGSLEDDWDFLPPKKIKDPDASKPEDWDERAKIDDPTDSKPEDWDKPEHIPDPDAKKPEDWDEEMDGEWEPPVIQNPEYKGEWKPRQIDNPDYKGTWIHPEIDNPEYSPDPSIYAYDNFGVLGLDLWQVKSGTIFDNFLITNDEAYAEEFGNETWGVTKAAEKQMKDKQDEEQRLKEEEEDKKRKEEEEAEDKEDDEDKDEDEEDEEDKEEDEEEDVPGQAKDEL.

Residues 1–17 (MLLSVPLLLGLLGLAAA) form the signal peptide. Residues 18–197 (EPAVYFKEQF…NSQVESGSLE (180 aa)) are N-domain. Q26 serves as a coordination point for Ca(2+). K48 carries the post-translational modification N6-acetyllysine. Positions 62 and 64 each coordinate Ca(2+). The cysteines at positions 105 and 137 are disulfide-linked. An alpha-D-glucoside is bound by residues Y109, K111, Y128, and D135. An N6-acetyllysine modification is found at K159. The stretch at 191–202 (VESGSLEDDWDF) is one 1-1 repeat. Residues 191 to 255 (VESGSLEDDW…DAKKPEDWDE (65 aa)) form a 4 X approximate repeats region. The segment at 193–278 (SGSLEDDWDF…PEYKGEWKPR (86 aa)) is disordered. The segment at 198–308 (DDWDFLPPKK…YSPDPSIYAY (111 aa)) is P-domain. A compositionally biased stretch (basic and acidic residues) spans 207–251 (KIKDPDASKPEDWDERAKIDDPTDSKPEDWDKPEHIPDPDAKKPE). Residue K209 is modified to N6-acetyllysine. Repeat copies occupy residues 210–221 (DPDASKPEDWDE), 227–238 (DPTDSKPEDWDK), 244–255 (DPDAKKPEDWDE), 259–269 (GEWEPPVIQNP), 273–283 (GEWKPRQIDNP), and 287–297 (GTWIHPEIDNP). An interaction with PPIB region spans residues 237–270 (DKPEHIPDPDAKKPEDWDEEMDGEWEPPVIQNPE). Positions 252 to 261 (DWDEEMDGEW) are enriched in acidic residues. The 3 X approximate repeats stretch occupies residues 259–297 (GEWEPPVIQNPEYKGEWKPRQIDNPDYKGTWIHPEIDNP). Residues 309–417 (DNFGVLGLDL…DVPGQAKDEL (109 aa)) are C-domain. D317 contacts an alpha-D-glucoside. D328 contributes to the Ca(2+) binding site. Positions 350–417 (TKAAEKQMKD…DVPGQAKDEL (68 aa)) are disordered. Residues 352–379 (AAEKQMKDKQDEEQRLKEEEEDKKRKEE) are compositionally biased toward basic and acidic residues. Over residues 380–409 (EEAEDKEDDEDKDEDEEDEEDKEEDEEEDV) the composition is skewed to acidic residues. Residues 414–417 (KDEL) carry the Prevents secretion from ER motif.

This sequence belongs to the calreticulin family. Monomer. Component of an EIF2 complex at least composed of CELF1/CUGBP1, CALR, CALR3, EIF2S1, EIF2S2, HSP90B1 and HSPA5. Interacts with PDIA3/ERp57 and SPACA9. Interacts with TRIM21. Interacts with NR3C1. Interacts with PPIB. Interacts (via P-domain) with PDIA5. Interacts with GABARAP. Interacts with CLCC1.

The protein localises to the endoplasmic reticulum lumen. It localises to the cytoplasm. Its subcellular location is the cytosol. It is found in the secreted. The protein resides in the extracellular space. The protein localises to the extracellular matrix. It localises to the cell surface. Its subcellular location is the sarcoplasmic reticulum lumen. It is found in the cytoplasmic vesicle. The protein resides in the secretory vesicle. The protein localises to the cortical granule. It localises to the cytoplasmic granule. Calcium-binding chaperone that promotes folding, oligomeric assembly and quality control in the endoplasmic reticulum (ER) via the calreticulin/calnexin cycle. This lectin interacts transiently with almost all of the monoglucosylated glycoproteins that are synthesized in the ER. Interacts with the DNA-binding domain of NR3C1 and mediates its nuclear export. Involved in maternal gene expression regulation. May participate in oocyte maturation via the regulation of calcium homeostasis. In Chlorocebus aethiops (Green monkey), this protein is Calreticulin (CALR).